The sequence spans 451 residues: MSIQSGEILETVKMVADQNFDVRTITIGIDLHDCISTDIDVLNQNIYNKITTVGKDLVATAKYLSAKYGVPIVNQRISVTPIAQIAAASKADSYVSVAQTLDKAAKAIGVSFIGGFSALVQKGMSPSDEVLIRSIPEAMKTTDIVCSSINVGSTRAGINMDAVKLAGETIKRTAEITPEGFGCAKIVVFCNAVEDNPFMAGAFHGSGEADAVINVGVSGPGVVKAALENSDATTLTEVAEVVKKTAFKITRVGELIGREASKMLNIPFGILDLSLAPTPAVGDSVARILEEMGLSVCGTHGTTAALALLNDAVKKGGMMASSAVGGLSGAFIPVSEDEGMIAAAEAGVLTLDKLEAMTAVCSVGLDMIAVPGDTPAHTISGIIADEAAIGMINSKTTAVRIIPVTGKTVGDSVEFGGLLGYAPVMPVKEGSCEVFVNRGGRIPAPVQSMKN.

The protein belongs to the UPF0210 family. Homodimer.

This Neisseria meningitidis serogroup C / serotype 2a (strain ATCC 700532 / DSM 15464 / FAM18) protein is UPF0210 protein NMC1568.